The chain runs to 255 residues: Hydroxyacylglutathione hydrolase (255 aa).

Residues His-56, His-58, Asp-60, His-61, His-114, Asp-133, and His-171 each coordinate Zn(2+).

The protein belongs to the metallo-beta-lactamase superfamily. Glyoxalase II family. Monomer. The cofactor is Zn(2+).

It carries out the reaction an S-(2-hydroxyacyl)glutathione + H2O = a 2-hydroxy carboxylate + glutathione + H(+). It participates in secondary metabolite metabolism; methylglyoxal degradation; (R)-lactate from methylglyoxal: step 2/2. Functionally, thiolesterase that catalyzes the hydrolysis of S-D-lactoyl-glutathione to form glutathione and D-lactic acid. This Bradyrhizobium sp. (strain ORS 278) protein is Hydroxyacylglutathione hydrolase.